The primary structure comprises 334 residues: MATLKEKLIAPVAEEEATVPNNKITVVGVGQVGMACAISILGKSLADELALVDVLEDKLKGEMMDLQHGSLFLQTPKIVADKDYSVTANSKIVVVTAGVRQQEGESRLNLVQRNVNVFKFIIPQIVKYSPDCIIIVVSNPVDILTYVTWKLSGLPKHRVIGSGCNLDSARFRYLMAEKLGIHPSSCHGWILGEHGDSSVAVWSGVNVAGVSLQELNPEMGTDNDSENWKEVHKMVVESAYEVIKLKGYTNWAIGLSVADLIESMLKNLSRIHPVSTMVKGMYGIENEVFLSLPCILNARGLTSVINQKLKDDEVAQLKKSADTLWDIQKDLKDL.

N-acetylalanine is present on Ala2. Lys7 carries the post-translational modification N6-acetyllysine. 31–53 provides a ligand contact to NAD(+); the sequence is QVGMACAISILGKSLADELALVD. Ser44 bears the Phosphoserine mark. Lys58 bears the N6-acetyllysine mark. An NAD(+)-binding site is contributed by Arg100. A substrate-binding site is contributed by Arg107. Lys119 carries the post-translational modification N6-acetyllysine. Asn139 is an NAD(+) binding site. Asn139 and Arg170 together coordinate substrate. Residue His194 is the Proton acceptor of the active site. Tyr240 bears the Phosphotyrosine mark. Position 249 (Thr249) interacts with substrate. Lys329 is subject to N6-acetyllysine.

Belongs to the LDH/MDH superfamily. LDH family. Homotetramer. Interacts with PTEN upstream reading frame protein MP31; the interaction leads to inhibition of mitochondrial lactate dehydrogenase activity, preventing conversion of lactate to pyruvate in mitochondria. In terms of tissue distribution, predominantly expressed in aerobic tissues such as cardiac muscle.

The protein resides in the cytoplasm. It localises to the mitochondrion inner membrane. The enzyme catalyses (S)-lactate + NAD(+) = pyruvate + NADH + H(+). It participates in fermentation; pyruvate fermentation to lactate; (S)-lactate from pyruvate: step 1/1. Interconverts simultaneously and stereospecifically pyruvate and lactate with concomitant interconversion of NADH and NAD(+). This chain is L-lactate dehydrogenase B chain (LDHB), found in Homo sapiens (Human).